The chain runs to 606 residues: Gamma-aminobutyric acid receptor subunit beta (606 aa).

The first 44 residues, 1–44 (MSDSKMDKLARMAPLPRTPLLTIWLAINMALIAQETGHKRIHTV), serve as a signal peptide directing secretion. Topologically, residues 45-268 (QAATGGGSML…CEIQFVRSMG (224 aa)) are extracellular. An N-linked (GlcNAc...) asparagine glycan is attached at Asn-58. Residues Cys-185 and Cys-199 are joined by a disulfide bond. N-linked (GlcNAc...) asparagine glycosylation occurs at Asn-253. 3 helical membrane passes run 269–291 (YYLI…SFWL), 297–316 (PARV…LMSS), and 333–356 (YLGT…YMAK). The Cytoplasmic portion of the chain corresponds to 357–568 (RIQMRKQRFM…LGITPSDIDK (212 aa)). Disordered regions lie at residues 376–451 (KQQL…VSNR) and 482–542 (HDPK…AAVP). Positions 381-395 (GANQQQANPNPNANV) are enriched in low complexity. The span at 396 to 425 (GGPGGVGVGPGGPGGPGGGVNVGVGMGMGP) shows a compositional bias: gly residues. Over residues 430–443 (GHGHHAHSHGHPHA) the composition is skewed to basic residues. Residues 499-536 (GGRGGPQSHGPGPGQGGGPPGGGGGGGGGGGPPEGGGD) show a composition bias toward gly residues. The helical transmembrane segment at 569–590 (YSRIVFPVCFVCFNLMYWIIYL) threads the bilayer.

This sequence belongs to the ligand-gated ion channel (TC 1.A.9) family. Gamma-aminobutyric acid receptor (TC 1.A.9.5) subfamily.

The protein localises to the postsynaptic cell membrane. It is found in the cell membrane. Its function is as follows. GABA, an inhibitory neurotransmitter, mediates neuronal inhibition by binding to the GABA receptor and opening an integral chloride channel. In Drosophila simulans (Fruit fly), this protein is Gamma-aminobutyric acid receptor subunit beta (Rdl).